A 210-amino-acid chain; its full sequence is Uracil phosphoribosyltransferase (210 aa).

5-phospho-alpha-D-ribose 1-diphosphate-binding positions include Arg77, Arg102, and 129–137; that span reads DPMLATGAS. Uracil is bound by residues Ile195 and 200–202; that span reads GDA. Asp201 is a binding site for 5-phospho-alpha-D-ribose 1-diphosphate.

The protein belongs to the UPRTase family. The cofactor is Mg(2+).

The catalysed reaction is UMP + diphosphate = 5-phospho-alpha-D-ribose 1-diphosphate + uracil. It participates in pyrimidine metabolism; UMP biosynthesis via salvage pathway; UMP from uracil: step 1/1. Its activity is regulated as follows. Allosterically activated by GTP. Catalyzes the conversion of uracil and 5-phospho-alpha-D-ribose 1-diphosphate (PRPP) to UMP and diphosphate. This chain is Uracil phosphoribosyltransferase, found in Mycoplasmoides gallisepticum (strain R(low / passage 15 / clone 2)) (Mycoplasma gallisepticum).